Here is a 210-residue protein sequence, read N- to C-terminus: MTKPTSAGQADDALVRLARERFDLPDQVRRLARPPVPSLEPPYGLRVAQLTDAEMLAEWMNRPHLAAAWEYDWPASRWRQHLNAQLEGTYSLPLIGSWHGTDGGYLELYWAAKDLISHYYDADPYDLGLHAAIADLSKVNRGFGPLLLPRIVASVFANEPRCRRIMFDPDHRNTATRRLCEWAGCKFLGEHDTTNRRMALYALEAPTTAA.

His-130 contacts substrate. Catalysis depends on Asp-168, which acts as the Proton acceptor.

This sequence belongs to the lysine N-acyltransferase MbtK family. As to quaternary structure, monomer.

It participates in siderophore biosynthesis; mycobactin biosynthesis. In terms of biological role, acyltransferase required for the direct transfer of medium- to long-chain fatty acyl moieties from a carrier protein (MbtL) on to the epsilon-amino group of lysine residue in the mycobactin core. This is Lysine N-acyltransferase MbtK (mbtK) from Mycobacterium tuberculosis (strain CDC 1551 / Oshkosh).